The primary structure comprises 399 residues: Argonaute-binding protein 1 (399 aa).

Component of the argonaute siRNA chaperone (ARC) complex composed of ago1, arb1 and arb2. Interacts with ago1.

It is found in the nucleus. The protein resides in the cytoplasm. Its function is as follows. Component of the argonaute siRNA chaperone (ARC) complex which is required for histone H3K9 methylation, heterochromatin assembly and siRNA generation. The ARC complex contains mostly double-stranded siRNA. Inhibits the release of the siRNA passenger strand from ago1 together with arb2. Inhibits the slicer activity of ago1. Required for swi6 localization to the centromeric repeats. The polypeptide is Argonaute-binding protein 1 (arb1) (Schizosaccharomyces pombe (strain 972 / ATCC 24843) (Fission yeast)).